The following is a 518-amino-acid chain: Bifunctional purine biosynthesis protein PurH (518 aa).

In terms of domain architecture, MGS-like spans Met-1 to Cys-144.

The protein belongs to the PurH family.

It catalyses the reaction (6R)-10-formyltetrahydrofolate + 5-amino-1-(5-phospho-beta-D-ribosyl)imidazole-4-carboxamide = 5-formamido-1-(5-phospho-D-ribosyl)imidazole-4-carboxamide + (6S)-5,6,7,8-tetrahydrofolate. The enzyme catalyses IMP + H2O = 5-formamido-1-(5-phospho-D-ribosyl)imidazole-4-carboxamide. Its pathway is purine metabolism; IMP biosynthesis via de novo pathway; 5-formamido-1-(5-phospho-D-ribosyl)imidazole-4-carboxamide from 5-amino-1-(5-phospho-D-ribosyl)imidazole-4-carboxamide (10-formyl THF route): step 1/1. It functions in the pathway purine metabolism; IMP biosynthesis via de novo pathway; IMP from 5-formamido-1-(5-phospho-D-ribosyl)imidazole-4-carboxamide: step 1/1. This is Bifunctional purine biosynthesis protein PurH from Lactococcus lactis subsp. cremoris (strain SK11).